We begin with the raw amino-acid sequence, 817 residues long: Protein EFR3 homolog B (817 aa).

Phosphoserine is present on residues Ser212, Ser214, and Ser216.

Belongs to the EFR3 family. As to quaternary structure, component of a phosphatidylinositol 4-kinase (PI4K) complex, composed of PI4KA, EFR3 (EFR3A or EFR3B), TTC7 (TTC7A or TTC7B) and HYCC (HYCC1 or HYCC2). Post-translationally, palmitoylated at its N-terminus, anchoring the protein to the plasma membrane.

The protein localises to the cell membrane. It is found in the cytoplasm. The protein resides in the cytosol. Component of a complex required to localize phosphatidylinositol 4-kinase (PI4K) to the plasma membrane. The complex acts as a regulator of phosphatidylinositol 4-phosphate (PtdIns(4)P) synthesis. In the complex, EFR3B probably acts as the membrane-anchoring component. Also involved in responsiveness to G-protein-coupled receptors; it is however unclear whether this role is direct or indirect. The sequence is that of Protein EFR3 homolog B from Homo sapiens (Human).